Here is a 576-residue protein sequence, read N- to C-terminus: MSSWNEAWDRGKQMVGEPLAKMTAAAASATGAAPPQQMQEEGNENPMQMHSNKVLQVMEQTWIGKCRKRWLLAILANMGFMISFGIRCNFGAAKTHMYKNYTDPYGKVHMHEFNWTIDELSVMESSYFYGYLVTQIPAGFLAAKFPPNKLFGFGIGVGAFLNILLPYGFKVKSDYLVAFIQITQGLVQGVCYPAMHGVWRYWAPPMERSKLATTAFTGSYAGAVLGLPLSAFLVSYVSWAAPFYLYGVCGVIWAILWFCVTFEKPAFHPTISQEEKIFIEDAIGHVSNTHPTIRSIPWKAIVTSKPVWAIIVANFARSWTFYLLLQNQLTYMKEALGMKIADSGLLAAIPHLVMGCVVLMGGQLADYLRSNKILSTTAVRKIFNCGGFGGEAAFMLIVAYTTSDTTAIMALIAAVGMSGFAISGFNVNHLDIAPRYAAILMGFSNGIGTLAGLTCPFVTEAFTAHSKHGWTSVFLLASLIHFTGVTFYAVYASGELQEWAEPKEEEEWSNKELVNKTGINGTGYGAAETTFTQLPAGVDSSYQAQAAPAPGTNPFASAWDEHGSSGVVENPHYQQW.

Residues 1-69 (MSSWNEAWDR…QTWIGKCRKR (69 aa)) lie on the Cytoplasmic side of the membrane. The disordered stretch occupies residues 25–46 (AAASATGAAPPQQMQEEGNENP). Positions 36 to 46 (QQMQEEGNENP) are enriched in polar residues. Residues 70-90 (WLLAILANMGFMISFGIRCNF) traverse the membrane as a helical segment. Residues 91-121 (GAAKTHMYKNYTDPYGKVHMHEFNWTIDELS) are Extracellular-facing. N-linked (GlcNAc...) asparagine glycans are attached at residues Asn100 and Asn114. A helical membrane pass occupies residues 122 to 142 (VMESSYFYGYLVTQIPAGFLA). Residues 143–150 (AKFPPNKL) lie on the Cytoplasmic side of the membrane. The helical transmembrane segment at 151–171 (FGFGIGVGAFLNILLPYGFKV) threads the bilayer. At 172–174 (KSD) the chain is on the extracellular side. A helical membrane pass occupies residues 175–195 (YLVAFIQITQGLVQGVCYPAM). Over 196–213 (HGVWRYWAPPMERSKLAT) the chain is Cytoplasmic. A helical membrane pass occupies residues 214-234 (TAFTGSYAGAVLGLPLSAFLV). Residues 235 to 239 (SYVSW) are Extracellular-facing. Residues 240–260 (AAPFYLYGVCGVIWAILWFCV) traverse the membrane as a helical segment. The Cytoplasmic portion of the chain corresponds to 261 to 305 (TFEKPAFHPTISQEEKIFIEDAIGHVSNTHPTIRSIPWKAIVTSK). The chain crosses the membrane as a helical span at residues 306–325 (PVWAIIVANFARSWTFYLLL). Over 326-344 (QNQLTYMKEALGMKIADSG) the chain is Extracellular. Residues 345-365 (LLAAIPHLVMGCVVLMGGQLA) form a helical membrane-spanning segment. The Cytoplasmic segment spans residues 366–381 (DYLRSNKILSTTAVRK). Residues 382 to 402 (IFNCGGFGGEAAFMLIVAYTT) traverse the membrane as a helical segment. Topologically, residues 403–406 (SDTT) are extracellular. A helical membrane pass occupies residues 407-427 (AIMALIAAVGMSGFAISGFNV). Topologically, residues 428 to 437 (NHLDIAPRYA) are cytoplasmic. Residues 438–458 (AILMGFSNGIGTLAGLTCPFV) form a helical membrane-spanning segment. At 459–471 (TEAFTAHSKHGWT) the chain is on the extracellular side. The helical transmembrane segment at 472–492 (SVFLLASLIHFTGVTFYAVYA) threads the bilayer. The Cytoplasmic portion of the chain corresponds to 493–576 (SGELQEWAEP…VVENPHYQQW (84 aa)).

Belongs to the major facilitator superfamily. Sodium/anion cotransporter family. VGLUT subfamily. In terms of tissue distribution, expressed in neurons of the pharynx and the extrapharyngeal nervous system. Highly expressed in male PHC sensory neurons.

Its subcellular location is the cell membrane. It is found in the synapse. Required for glutamatergic synaptic transmission. In AWB and AWC sensory neurons, required for the detection of preferred food sources, probably via glutamatergic neurotransmission from sensory neurons. Negatively regulates the turning step of male mating behavior. This Caenorhabditis elegans protein is Probable vesicular glutamate transporter eat-4.